A 469-amino-acid polypeptide reads, in one-letter code: Cysteine--tRNA ligase (469 aa).

C28 is a Zn(2+) binding site. A 'HIGH' region motif is present at residues 30–40 (CTVYDLCHIGH). C216, H241, and E245 together coordinate Zn(2+). Positions 273-277 (KMSKS) match the 'KMSKS' region motif. K276 lines the ATP pocket.

It belongs to the class-I aminoacyl-tRNA synthetase family. In terms of assembly, monomer. It depends on Zn(2+) as a cofactor.

The protein resides in the cytoplasm. The catalysed reaction is tRNA(Cys) + L-cysteine + ATP = L-cysteinyl-tRNA(Cys) + AMP + diphosphate. This chain is Cysteine--tRNA ligase, found in Colwellia psychrerythraea (strain 34H / ATCC BAA-681) (Vibrio psychroerythus).